A 150-amino-acid chain; its full sequence is Transcriptional repressor NrdR (150 aa).

The segment at 3–33 (CPYCTGESAVIDTRELDNGETIRRRRRCKHC) is a zinc-finger region. One can recognise an ATP-cone domain in the interval 48-138 (VMVVKKNGDR…VYRSFSDLGK (91 aa)).

It belongs to the NrdR family. Zn(2+) serves as cofactor.

Functionally, negatively regulates transcription of bacterial ribonucleotide reductase nrd genes and operons by binding to NrdR-boxes. This Herpetosiphon aurantiacus (strain ATCC 23779 / DSM 785 / 114-95) protein is Transcriptional repressor NrdR.